The sequence spans 106 residues: Iron-sulfur cluster assembly protein CyaY (106 aa).

The protein belongs to the frataxin family.

Involved in iron-sulfur (Fe-S) cluster assembly. May act as a regulator of Fe-S biogenesis. In Photorhabdus laumondii subsp. laumondii (strain DSM 15139 / CIP 105565 / TT01) (Photorhabdus luminescens subsp. laumondii), this protein is Iron-sulfur cluster assembly protein CyaY.